A 688-amino-acid polypeptide reads, in one-letter code: Glycine--tRNA ligase beta subunit (688 aa).

The protein belongs to the class-II aminoacyl-tRNA synthetase family. As to quaternary structure, tetramer of two alpha and two beta subunits.

Its subcellular location is the cytoplasm. The enzyme catalyses tRNA(Gly) + glycine + ATP = glycyl-tRNA(Gly) + AMP + diphosphate. The chain is Glycine--tRNA ligase beta subunit from Shewanella sp. (strain MR-4).